The following is a 283-amino-acid chain: Protein/nucleic acid deglycase HchA (283 aa).

Residues His-86, Glu-91, and His-123 each contribute to the Zn(2+) site. Cys-185 serves as the catalytic Nucleophile.

It belongs to the peptidase C56 family. HchA subfamily. In terms of assembly, homodimer.

The protein resides in the cytoplasm. It carries out the reaction N(omega)-(1-hydroxy-2-oxopropyl)-L-arginyl-[protein] + H2O = lactate + L-arginyl-[protein] + H(+). The enzyme catalyses N(6)-(1-hydroxy-2-oxopropyl)-L-lysyl-[protein] + H2O = lactate + L-lysyl-[protein] + H(+). The catalysed reaction is S-(1-hydroxy-2-oxopropyl)-L-cysteinyl-[protein] + H2O = lactate + L-cysteinyl-[protein] + H(+). It catalyses the reaction N(omega)-(1-hydroxy-2-oxoethyl)-L-arginyl-[protein] + H2O = L-arginyl-[protein] + glycolate + H(+). It carries out the reaction N(6)-(1-hydroxy-2-oxoethyl)-L-lysyl-[protein] + H2O = glycolate + L-lysyl-[protein] + H(+). The enzyme catalyses S-(1-hydroxy-2-oxoethyl)-L-cysteinyl-[protein] + H2O = glycolate + L-cysteinyl-[protein] + H(+). The catalysed reaction is N(2)-(1-hydroxy-2-oxopropyl)-dGTP + H2O = lactate + dGTP + H(+). It catalyses the reaction N(2)-(1-hydroxy-2-oxopropyl)-GTP + H2O = lactate + GTP + H(+). It carries out the reaction N(2)-(1-hydroxy-2-oxopropyl)-GDP + H2O = lactate + GDP + H(+). The enzyme catalyses N(2)-(1-hydroxy-2-oxopropyl)-GMP + H2O = lactate + GMP + H(+). The catalysed reaction is N(2)-(1-hydroxy-2-oxoethyl)-dGTP + H2O = dGTP + glycolate + H(+). It catalyses the reaction N(2)-(1-hydroxy-2-oxoethyl)-GTP + H2O = glycolate + GTP + H(+). It carries out the reaction N(2)-(1-hydroxy-2-oxoethyl)-GDP + H2O = glycolate + GDP + H(+). The enzyme catalyses N(2)-(1-hydroxy-2-oxoethyl)-GMP + H2O = glycolate + GMP + H(+). The catalysed reaction is an N(2)-(1-hydroxy-2-oxopropyl)-guanosine in RNA + H2O = a guanosine in RNA + lactate + H(+). It catalyses the reaction an N(2)-(1-hydroxy-2-oxopropyl)-2'-deoxyguanosine in DNA + H2O = a 2'-deoxyguanosine in DNA + lactate + H(+). It carries out the reaction an N(2)-(1-hydroxy-2-oxoethyl)-guanosine in RNA + H2O = a guanosine in RNA + glycolate + H(+). The enzyme catalyses an N(2)-(1-hydroxy-2-oxoethyl)-2'-deoxyguanosine in DNA + H2O = a 2'-deoxyguanosine in DNA + glycolate + H(+). Functionally, protein and nucleotide deglycase that catalyzes the deglycation of the Maillard adducts formed between amino groups of proteins or nucleotides and reactive carbonyl groups of glyoxals. Thus, functions as a protein deglycase that repairs methylglyoxal- and glyoxal-glycated proteins, and releases repaired proteins and lactate or glycolate, respectively. Deglycates cysteine, arginine and lysine residues in proteins, and thus reactivates these proteins by reversing glycation by glyoxals. Acts on early glycation intermediates (hemithioacetals and aminocarbinols), preventing the formation of Schiff bases and advanced glycation endproducts (AGE). Also functions as a nucleotide deglycase able to repair glycated guanine in the free nucleotide pool (GTP, GDP, GMP, dGTP) and in DNA and RNA. Is thus involved in a major nucleotide repair system named guanine glycation repair (GG repair), dedicated to reversing methylglyoxal and glyoxal damage via nucleotide sanitization and direct nucleic acid repair. Plays an important role in protecting cells from carbonyl stress. The chain is Protein/nucleic acid deglycase HchA from Escherichia coli O7:K1 (strain IAI39 / ExPEC).